Reading from the N-terminus, the 201-residue chain is Recombination protein RecR (201 aa).

The C4-type zinc finger occupies 60–75; the sequence is CSCCGNVDTSDPCTIC. The region spanning 83-178 is the Toprim domain; sequence TTLIVVEDVS…RVTRLAHGVP (96 aa).

This sequence belongs to the RecR family.

Functionally, may play a role in DNA repair. It seems to be involved in an RecBC-independent recombinational process of DNA repair. It may act with RecF and RecO. This chain is Recombination protein RecR, found in Brucella anthropi (strain ATCC 49188 / DSM 6882 / CCUG 24695 / JCM 21032 / LMG 3331 / NBRC 15819 / NCTC 12168 / Alc 37) (Ochrobactrum anthropi).